Consider the following 549-residue polypeptide: Glucose-6-phosphate isomerase (549 aa).

Catalysis depends on Glu-355, which acts as the Proton donor. Active-site residues include His-386 and Lys-514.

Belongs to the GPI family.

Its subcellular location is the cytoplasm. It catalyses the reaction alpha-D-glucose 6-phosphate = beta-D-fructose 6-phosphate. It functions in the pathway carbohydrate biosynthesis; gluconeogenesis. The protein operates within carbohydrate degradation; glycolysis; D-glyceraldehyde 3-phosphate and glycerone phosphate from D-glucose: step 2/4. Functionally, catalyzes the reversible isomerization of glucose-6-phosphate to fructose-6-phosphate. In Salmonella arizonae (strain ATCC BAA-731 / CDC346-86 / RSK2980), this protein is Glucose-6-phosphate isomerase.